An 86-amino-acid chain; its full sequence is U15-lycotoxin-Ls1d (86 aa).

The first 20 residues, 1–20, serve as a signal peptide directing secretion; sequence MNSKIFAVLLLLGLLSCVLS. The WAP domain maps to 21-66; the sequence is DQYCPKSSITACKKMNIRNDCCKDDDCTGGSWCCATPCGNFCKYPT. 5 disulfide bridges follow: Cys-24–Cys-54, Cys-32–Cys-58, Cys-41–Cys-53, Cys-42–Cys-80, and Cys-47–Cys-62.

The protein belongs to the venom protein 11 family. 01 (wap-1) subfamily. Post-translationally, contains 5 disulfide bonds. Expressed by the venom gland.

The protein localises to the secreted. In terms of biological role, has antibacterial activity. This Lycosa singoriensis (Wolf spider) protein is U15-lycotoxin-Ls1d.